We begin with the raw amino-acid sequence, 199 residues long: Probable thymidylate kinase (199 aa).

7-14 is an ATP binding site; that stretch reads GLDGSGKT.

It belongs to the thymidylate kinase family.

The catalysed reaction is dTMP + ATP = dTDP + ADP. This chain is Probable thymidylate kinase, found in Halobacterium salinarum (strain ATCC 29341 / DSM 671 / R1).